Consider the following 351-residue polypeptide: Phospho-N-acetylmuramoyl-pentapeptide-transferase (351 aa).

10 helical membrane passes run 17-37 (TAYATIFAFLLALIFGPFIIL), 63-83 (IPTMGGILIFFCVLVSLFFWI), 85-105 (LWNVYFLIVLFVMISFACLGF), 135-155 (ISVTMLYYFGGEHISIIYFPF), 158-178 (SLKLDLGVLYIPFGMFILISA), 190-210 (GLAIGLSIVVTGALVIIAYLT), 230-250 (LVIFLGALLGGSFGFLWFNAY), 254-274 (IMMGDTGSLSIGAVLGMTALI), 279-299 (ILFAILAGVFVLETLSVIIQV), and 328-348 (QVVIRFWIIGLIFAIIALSTL).

This sequence belongs to the glycosyltransferase 4 family. MraY subfamily. Requires Mg(2+) as cofactor.

It is found in the cell inner membrane. The enzyme catalyses UDP-N-acetyl-alpha-D-muramoyl-L-alanyl-gamma-D-glutamyl-meso-2,6-diaminopimeloyl-D-alanyl-D-alanine + di-trans,octa-cis-undecaprenyl phosphate = di-trans,octa-cis-undecaprenyl diphospho-N-acetyl-alpha-D-muramoyl-L-alanyl-D-glutamyl-meso-2,6-diaminopimeloyl-D-alanyl-D-alanine + UMP. It functions in the pathway cell wall biogenesis; peptidoglycan biosynthesis. Catalyzes the initial step of the lipid cycle reactions in the biosynthesis of the cell wall peptidoglycan: transfers peptidoglycan precursor phospho-MurNAc-pentapeptide from UDP-MurNAc-pentapeptide onto the lipid carrier undecaprenyl phosphate, yielding undecaprenyl-pyrophosphoryl-MurNAc-pentapeptide, known as lipid I. This Borrelia hermsii (strain HS1 / DAH) protein is Phospho-N-acetylmuramoyl-pentapeptide-transferase.